A 246-amino-acid chain; its full sequence is Uridylate kinase (246 aa).

Residue 19 to 22 (KISG) coordinates ATP. Residue G61 participates in UMP binding. ATP-binding residues include G62 and R66. UMP is bound by residues D81 and 142 to 149 (TGNPFFTT). The ATP site is built by T169, Q170, Y175, and D178.

It belongs to the UMP kinase family. Homohexamer.

It localises to the cytoplasm. The catalysed reaction is UMP + ATP = UDP + ADP. Its pathway is pyrimidine metabolism; CTP biosynthesis via de novo pathway; UDP from UMP (UMPK route): step 1/1. Its activity is regulated as follows. Inhibited by UTP. In terms of biological role, catalyzes the reversible phosphorylation of UMP to UDP. The polypeptide is Uridylate kinase (Wolbachia sp. subsp. Brugia malayi (strain TRS)).